The following is a 342-amino-acid chain: MAHIVTLNTPLREDWLAQLADVVTNPDELLHLLQIEADENLRAGQDARRLFALRVPRAFIARMEKGNPDDPLLRQVLTSRDEFIVAPGFSTDPLEEQHSVVPGLLHKYQNRALLLVKGGCAVNCRYCFRRHFPYAENQGNKRNWTVALEYIAAHPELDEIIFSGGDPLMAKDHELDWLLTQLEAIKHVKRLRIHSRLPIVIPARITDELVARFDQSRLQILLVNHINHANEVDEAFGLAMKKLRHVGVTLLNQSVLLRGVNDNARTLANLSNALFDAGVMPYYLHVLDKVQGAAHFMVTDDEARQIMRELLTLVSGYMVPRLAREIGGEPSKTPLDLQLRQC.

One can recognise a Radical SAM core domain in the interval 106-329 (HKYQNRALLL…PRLAREIGGE (224 aa)). Positions 120, 124, and 127 each coordinate [4Fe-4S] cluster. The residue at position 332 (Lys-332) is an N6-(pyridoxal phosphate)lysine.

The protein belongs to the radical SAM superfamily. KamA family. Requires [4Fe-4S] cluster as cofactor. Pyridoxal 5'-phosphate is required as a cofactor.

The catalysed reaction is L-lysine = D-beta-lysine. Functionally, with EpmA is involved in the beta-lysylation step of the post-translational modification of translation elongation factor P (EF-P) on 'Lys-34'. EpmB appears to act before EpmA. Displays lysine 2,3-aminomutase activity, producing (R)-beta-lysine from (S)-alpha-lysine (L-lysine). The chain is L-lysine 2,3-aminomutase (epmB) from Salmonella typhimurium (strain LT2 / SGSC1412 / ATCC 700720).